The chain runs to 178 residues: Aspartate carbamoyltransferase regulatory chain (178 aa).

Residues 1–15 (MNDREPNQKESKESV) are compositionally biased toward basic and acidic residues. Positions 1–23 (MNDREPNQKESKESVNDAVPRAR) are disordered. Zn(2+) is bound by residues cysteine 133, cysteine 138, cysteine 159, and cysteine 162.

The protein belongs to the PyrI family. As to quaternary structure, contains catalytic and regulatory chains. The cofactor is Zn(2+).

Its function is as follows. Involved in allosteric regulation of aspartate carbamoyltransferase. This is Aspartate carbamoyltransferase regulatory chain from Haloquadratum walsbyi (strain DSM 16790 / HBSQ001).